A 57-amino-acid polypeptide reads, in one-letter code: uncharacterized protein (57 aa).

This is an uncharacterized protein from Escherichia coli (strain K12).